Consider the following 171-residue polypeptide: MNSNGDKLSLSVQNLANTNEITIVQAIGELKKSGKDAIPVLVEALKEEGSLCNIAAAVLGEFGEDASEAAEELSCLLKSHAEDTRMAAAISLMRIGKPSLPFVIKIAQESEGQSCFWASWCIAWIDPSCIEPKMYKCLKYEHEHPSGIVAPFAAEEALGKLIAFQLKDKED.

Required for production of the bacteriocin SkfA. This is an uncharacterized protein from Bacillus subtilis (strain 168).